A 135-amino-acid chain; its full sequence is uncharacterized protein (135 aa).

A run of 3 helical transmembrane segments spans residues 12–32, 68–88, and 98–118; these read IPILLLVLYIALGVFIQYNGI, SMIGGMPGYLPLYAYLCAKFC, and GILYFSVVLFIMTSVIWFYLF.

The protein resides in the cell membrane. This is an uncharacterized protein from Methanocaldococcus jannaschii (strain ATCC 43067 / DSM 2661 / JAL-1 / JCM 10045 / NBRC 100440) (Methanococcus jannaschii).